We begin with the raw amino-acid sequence, 123 residues long: Beta-defensin 126 (123 aa).

Positions 1–20 (MKSLLFTLAVFMLLAQLVSG) are cleaved as a signal peptide. The in vitro binds to LPS, mediates antimicrobial activity and inhibits LPS-mediated inflammation stretch occupies residues 21 to 63 (NLYVKRCLNDIGICKKTCKPEEVRSEHGWVMCGKRKACCVPAD). Disulfide bonds link cysteine 27/cysteine 58, cysteine 34/cysteine 52, and cysteine 38/cysteine 59.

Belongs to the beta-defensin family. As to quaternary structure, homodimer or homooligomer; disulfide-linked. In terms of processing, O-glycosylated; glycans contain sialic acids alpha(2,3)-linked to galactose and N-acetylgalactosamine. The C-terminal O-glycosylation contributes substantially to the sperm glyocalyx. In terms of tissue distribution, high-level and epididymis-specific expression. Detected in epithelial cells lining the efferent ductules, initial segment, and cauda regions of the epididymis, but not on spermatozoa.

The protein localises to the secreted. Functionally, highly glycosylated atypical beta-defensin involved in several aspects of sperm function. Facilitates sperm transport in the female reproductive tract and contributes to sperm protection against immunodetection; both functions are probably implicating the negative surface charge provided by its O-linked oligosaccharides in the sperm glycocalyx. Involved in binding of sperm to oviductal epithelial cells to form a sperm reservoir until ovulation. Release from the sperm surface during capacitation and ovaluation by an elevation of oviductal fluid pH is unmasking other surface components and allows sperm to penetrate the cumulus matrix and bind to the zona pellucida of the oocyte. In vitro has antimicrobial activity and may inhibit LPS-mediated inflammation. This chain is Beta-defensin 126 (DEFB126), found in Macaca fascicularis (Crab-eating macaque).